Reading from the N-terminus, the 503-residue chain is Probable cytosol aminopeptidase (503 aa).

2 residues coordinate Mn(2+): Lys-274 and Asp-279. Lys-286 is a catalytic residue. Positions 297, 356, and 358 each coordinate Mn(2+). Residue Arg-360 is part of the active site.

The protein belongs to the peptidase M17 family. Requires Mn(2+) as cofactor.

The protein resides in the cytoplasm. It carries out the reaction Release of an N-terminal amino acid, Xaa-|-Yaa-, in which Xaa is preferably Leu, but may be other amino acids including Pro although not Arg or Lys, and Yaa may be Pro. Amino acid amides and methyl esters are also readily hydrolyzed, but rates on arylamides are exceedingly low.. The enzyme catalyses Release of an N-terminal amino acid, preferentially leucine, but not glutamic or aspartic acids.. Functionally, presumably involved in the processing and regular turnover of intracellular proteins. Catalyzes the removal of unsubstituted N-terminal amino acids from various peptides. In Burkholderia lata (strain ATCC 17760 / DSM 23089 / LMG 22485 / NCIMB 9086 / R18194 / 383), this protein is Probable cytosol aminopeptidase.